A 362-amino-acid chain; its full sequence is GDSL esterase/lipase At5g18430 (362 aa).

The signal sequence occupies residues 1–19 (MTISTVIAFMSMFLVFVMS). Residue Ser35 is the Nucleophile of the active site. The N-linked (GlcNAc...) asparagine glycan is linked to Asn117. Residues Asp327 and His330 contribute to the active site. N-linked (GlcNAc...) asparagine glycosylation occurs at Asn355.

Belongs to the 'GDSL' lipolytic enzyme family.

The protein resides in the secreted. In Arabidopsis thaliana (Mouse-ear cress), this protein is GDSL esterase/lipase At5g18430.